An 81-amino-acid polypeptide reads, in one-letter code: Small ribosomal subunit protein bS16 (81 aa).

The protein belongs to the bacterial ribosomal protein bS16 family.

The polypeptide is Small ribosomal subunit protein bS16 (Alkaliphilus oremlandii (strain OhILAs) (Clostridium oremlandii (strain OhILAs))).